Consider the following 95-residue polypeptide: Integration host factor subunit beta (95 aa).

A disordered region spans residues 56-76 (RAPRTGRNPKTGSSVDLEGKY).

It belongs to the bacterial histone-like protein family. Heterodimer of an alpha and a beta chain.

Its function is as follows. This protein is one of the two subunits of integration host factor, a specific DNA-binding protein that functions in genetic recombination as well as in transcriptional and translational control. This is Integration host factor subunit beta from Shewanella baltica (strain OS223).